A 255-amino-acid chain; its full sequence is Developmental and secondary metabolism regulator MVE1 (255 aa).

A Velvet domain is found at 31-226; the sequence is GRKLTYRMSV…AEQGCRVRIR (196 aa). The Nuclear localization signal signature appears at 45-50; it reads VRARAC. Disordered stretches follow at residues 163-184 and 229-255; these read CKSPKDEDKTEEGAKSESDAHV and VRMRKRETKPGGREWDNYEDETAQARA. The span at 245–255 shows a compositional bias: acidic residues; the sequence is NYEDETAQARA.

The protein belongs to the velvet family. VeA subfamily. In terms of assembly, component of the heterotrimeric velvet complex composed of LAE1, MVE1 and VEL2; MVE1 acting as a bridging protein between LAE1 and VEL2.

It is found in the nucleus. The protein localises to the cytoplasm. Component of the velvet transcription factor complex that controls sexual/asexual developmental ratio in response to light, promoting sexual development in the darkness while stimulating asexual sporulation under illumination. The velvet complex hat acts as a global regulator for secondary metabolite gene expression. Controls the expression of the melanin gene cluster. Mediates the light-stimulated formation of aerial mycelia. The polypeptide is Developmental and secondary metabolism regulator MVE1 (Zymoseptoria tritici (strain CBS 115943 / IPO323) (Speckled leaf blotch fungus)).